Reading from the N-terminus, the 200-residue chain is Rubrerythrin (200 aa).

Residues 12 to 155 (SIKGSKTEKH…ALLAHVEDGS (144 aa)) form the Ferritin-like diiron domain. Fe(3+) is bound by residues Glu29, Glu62, Glu103, Glu106, Glu137, His140, Cys167, Cys170, Cys183, and Cys186. Residues 162–200 (EIAWQCRNCGYVITSKKAPKLCPACAHPQAYFEPMKTNY) form the Rubredoxin-like domain.

As to quaternary structure, homodimer. Possesses two rubredoxin-like centers and two non-sulfur oxo-bridged di-iron centers per dimer. Requires Fe(3+) as cofactor.

The protein resides in the cytoplasm. May provide oxidative stress protection via catalytic reduction of intracellular hydrogen peroxide. This Porphyromonas gingivalis (strain ATCC BAA-308 / W83) protein is Rubrerythrin (rbr).